The chain runs to 459 residues: tRNA modification GTPase MnmE (459 aa).

(6S)-5-formyl-5,6,7,8-tetrahydrofolate-binding residues include Arg22, Glu85, and Arg124. Residues 221 to 380 (GLSTVIVGKP…LEIQIRDLFF (160 aa)) form the TrmE-type G domain. Asn231 is a binding site for K(+). GTP is bound by residues 231 to 236 (NVGKSS), 250 to 256 (TEVAGTT), and 275 to 278 (DTAG). A Mg(2+)-binding site is contributed by Ser235. K(+) is bound by residues Thr250, Val252, and Thr255. Thr256 serves as a coordination point for Mg(2+). Residue Lys459 participates in (6S)-5-formyl-5,6,7,8-tetrahydrofolate binding.

The protein belongs to the TRAFAC class TrmE-Era-EngA-EngB-Septin-like GTPase superfamily. TrmE GTPase family. Homodimer. Heterotetramer of two MnmE and two MnmG subunits. K(+) is required as a cofactor.

The protein localises to the cytoplasm. Functionally, exhibits a very high intrinsic GTPase hydrolysis rate. Involved in the addition of a carboxymethylaminomethyl (cmnm) group at the wobble position (U34) of certain tRNAs, forming tRNA-cmnm(5)s(2)U34. This Staphylococcus aureus (strain Mu3 / ATCC 700698) protein is tRNA modification GTPase MnmE.